The sequence spans 261 residues: MVNIPKSHPRYWSLYYREKIIEGMEKGMTAKAGLIAHGRGEAFDYLIGERTIEPAERAMRAAVAKFLLAEHPVISVNGNVAALVPKETIELAKALNAKLEINLFYRTEERVRTIAEELRKYDPEIEILGINPTKRIPGLEHERGKVDENGIWKADVVLVPLEDGDRTEALVRMGKFVVTVDLNPLSRSARMADITIVDNIVRAYPRMVELAREMKDYSREELLKIVGEYDNGKTLSDVLLHIRDRLTRLAEEGIWRRKELE.

ATP is bound by residues Arg-17, Arg-39, 181–183 (DLN), 187–188 (RS), and 199–200 (NI).

The protein belongs to the archaeal phosphopantothenate synthetase family. As to quaternary structure, homodimer.

It carries out the reaction (R)-4-phosphopantoate + beta-alanine + ATP = (R)-4'-phosphopantothenate + AMP + diphosphate + H(+). It participates in cofactor biosynthesis; coenzyme A biosynthesis. Its activity is regulated as follows. Activity is not affected by 4'-phosphopantothenate or CoA/acetyl-CoA. Catalyzes the condensation of (R)-4-phosphopantoate and beta-alanine to 4'-phosphopantothenate in the CoA biosynthesis pathway. Cannot use (R)-pantoate as substrate and thus does not display pantothenate synthetase (PS) activity. Displays strict specificity for its natural substrates, 4-phosphopantoate, ATP and beta-alanine. The protein is 4-phosphopantoate--beta-alanine ligase of Thermococcus kodakarensis (strain ATCC BAA-918 / JCM 12380 / KOD1) (Pyrococcus kodakaraensis (strain KOD1)).